A 49-amino-acid polypeptide reads, in one-letter code: Large ribosomal subunit protein bL33B (49 aa).

This sequence belongs to the bacterial ribosomal protein bL33 family.

In Shouchella clausii (strain KSM-K16) (Alkalihalobacillus clausii), this protein is Large ribosomal subunit protein bL33B.